We begin with the raw amino-acid sequence, 319 residues long: tRNA uridine(34) hydroxylase (319 aa).

A Rhodanese domain is found at 123–221; sequence GDPDVVVIDT…YLETIPPEQS (99 aa). Catalysis depends on Cys181, which acts as the Cysteine persulfide intermediate. The segment at 298 to 319 is disordered; it reads ARQQVHIGASPEPKAMPATAGR.

The protein belongs to the TrhO family.

It carries out the reaction uridine(34) in tRNA + AH2 + O2 = 5-hydroxyuridine(34) in tRNA + A + H2O. Functionally, catalyzes oxygen-dependent 5-hydroxyuridine (ho5U) modification at position 34 in tRNAs. This chain is tRNA uridine(34) hydroxylase, found in Albidiferax ferrireducens (strain ATCC BAA-621 / DSM 15236 / T118) (Rhodoferax ferrireducens).